We begin with the raw amino-acid sequence, 520 residues long: Protein-export membrane protein SecD (520 aa).

The next 6 helical transmembrane spans lie at 10-30, 364-384, 391-411, 417-437, 461-481, and 483-503; these read IILLVIVVIVSLFALVSPTLA, DSLLAGLVAVFAVSGVVFLRY, LPMIVTALSEVLILLGFAAGI, LSVIAGFITVIGTGVDDLVII, FWVIGAAAATTIIAMSPLAIL, and LGDLQGFAIFTILGVLVGVLI.

Belongs to the SecD/SecF family. SecD subfamily. In terms of assembly, part of the protein translocation apparatus. Forms a complex with SecF.

It is found in the cell membrane. Involved in protein export. This Haloquadratum walsbyi (strain DSM 16790 / HBSQ001) protein is Protein-export membrane protein SecD.